We begin with the raw amino-acid sequence, 353 residues long: Melatonin receptor type 1A (353 aa).

The segment at 1-26 (MRANGSELNGTVLPRDPPAEGSPRRP) is disordered. Over 1–32 (MRANGSELNGTVLPRDPPAEGSPRRPPWVTST) the chain is Extracellular. 2 N-linked (GlcNAc...) asparagine glycosylation sites follow: Asn4 and Asn9. Residues 33–53 (LATILIFTIVVDLLGNLLVIL) traverse the membrane as a helical segment. Topologically, residues 54–66 (SVYRNKKLRNAGN) are cytoplasmic. A helical membrane pass occupies residues 67–87 (IFVVSLAIADLVVAIYPYPLV). The Extracellular portion of the chain corresponds to 88-105 (LTSVFHNGWNLGYLHCQI). An intrachain disulfide couples Cys103 to Cys180. The helical transmembrane segment at 106-126 (SGFLMGLSVIGSIFNITGIAI) threads the bilayer. Residues 127–145 (NRYCYICHSLKYDKLYSDK) lie on the Cytoplasmic side of the membrane. Residues 146-166 (NSLCYVGLIWVLTVVAIVPNL) traverse the membrane as a helical segment. Residues 167–190 (FVGSLQYDPRIYSCTFAQSVSSAY) are Extracellular-facing. The helical transmembrane segment at 191–211 (TIAVVFFHFILPIAIVTYCYL) threads the bilayer. Residues 212–243 (RIWILVIQVRRRVKPDNNPRLKPHDFRNFVTM) are Cytoplasmic-facing. Residues 244 to 264 (FVVFVLFAVCWAPLNFIGLAV) form a helical membrane-spanning segment. The Extracellular portion of the chain corresponds to 265-277 (AVDPETIIPRIPE). A helical membrane pass occupies residues 278–298 (WLFVSSYYMAYFNSCLNAIIY). Topologically, residues 299–353 (GLLNQNFRREYKKIVVSFCTAKAFFQDSSNDAADRIRSKPSPLITNNNQVKVDSV) are cytoplasmic.

It belongs to the G-protein coupled receptor 1 family. Expressed in optic tectum and retina, less in neostriatum, hypothalamus and thalamus.

It is found in the cell membrane. Functionally, high affinity receptor for melatonin. The activity of this receptor is mediated by pertussis toxin sensitive G proteins that inhibits adenylate cyclase activity. The chain is Melatonin receptor type 1A from Gallus gallus (Chicken).